The sequence spans 402 residues: Putative cystathionine beta-lyase (402 aa).

Lys-236 carries the N6-(pyridoxal phosphate)lysine modification.

The protein belongs to the class-II pyridoxal-phosphate-dependent aminotransferase family. MalY/PatB cystathionine beta-lyase subfamily. Pyridoxal 5'-phosphate is required as a cofactor.

It carries out the reaction L,L-cystathionine + H2O = L-homocysteine + pyruvate + NH4(+). It catalyses the reaction an S-substituted L-cysteine + H2O = a thiol + pyruvate + NH4(+). Its pathway is amino-acid biosynthesis; L-methionine biosynthesis via de novo pathway; L-homocysteine from L-cystathionine: step 1/1. This chain is Putative cystathionine beta-lyase, found in Mycobacterium leprae (strain TN).